The following is a 747-amino-acid chain: ATPase family gene 2 protein homolog B (747 aa).

Methionine 1 carries the post-translational modification N-acetylmethionine. ATP contacts are provided by residues 234–241 (GPPGVGKT) and 500–507 (GPPGCAKT).

Belongs to the AAA ATPase family. AFG2 subfamily. As to quaternary structure, part of the 55LCC heterohexameric ATPase complex composed at least of AIRIM, AFG2A, AFG2B and CINP. Associates with pre-60S ribosomal particles. In terms of tissue distribution, expressed in neurons; also expressed at lower level in astrocytes, oligodendrocytes and microglia.

It localises to the cytoplasm. It is found in the cytoskeleton. The protein localises to the spindle. The protein resides in the nucleus. It catalyses the reaction ATP + H2O = ADP + phosphate + H(+). Its activity is regulated as follows. In the context of 55LCC heterohexameric ATPase complex, the ATPase activity is stimulated by DNA binding and inhibited in presence of RNA. Its function is as follows. ATP-dependent chaperone part of the 55LCC heterohexameric ATPase complex which is chromatin-associated and promotes replisome proteostasis to maintain replication fork progression and genome stability. Required for replication fork progression, sister chromatid cohesion, and chromosome stability. The ATPase activity is specifically enhanced by replication fork DNA and is coupled to cysteine protease-dependent cleavage of replisome substrates in response to replication fork damage. Uses ATPase activity to process replisome substrates in S-phase, facilitating their proteolytic turnover from chromatin to ensure DNA replication and mitotic fidelity. Plays an essential role in the cytoplasmic maturation steps of pre-60S ribosomal particles by promoting the release of shuttling protein RSL24D1/RLP24 from the pre-ribosomal particles. This Rattus norvegicus (Rat) protein is ATPase family gene 2 protein homolog B (Afg2b).